The following is a 309-amino-acid chain: NADH-quinone oxidoreductase subunit C (309 aa).

The disordered stretch occupies residues 198–309 (LPGDEKAVPP…RTRKKKEDGE (112 aa)). Over residues 220-230 (TKGDAKADVPK) the composition is skewed to basic and acidic residues. Residues 246–261 (DAAAKPVAEAAAPAAT) show a composition bias toward low complexity.

It belongs to the complex I 30 kDa subunit family. As to quaternary structure, NDH-1 is composed of 14 different subunits. Subunits NuoB, C, D, E, F, and G constitute the peripheral sector of the complex.

The protein resides in the cell inner membrane. It catalyses the reaction a quinone + NADH + 5 H(+)(in) = a quinol + NAD(+) + 4 H(+)(out). NDH-1 shuttles electrons from NADH, via FMN and iron-sulfur (Fe-S) centers, to quinones in the respiratory chain. The immediate electron acceptor for the enzyme in this species is believed to be ubiquinone. Couples the redox reaction to proton translocation (for every two electrons transferred, four hydrogen ions are translocated across the cytoplasmic membrane), and thus conserves the redox energy in a proton gradient. In Novosphingobium aromaticivorans (strain ATCC 700278 / DSM 12444 / CCUG 56034 / CIP 105152 / NBRC 16084 / F199), this protein is NADH-quinone oxidoreductase subunit C.